A 339-amino-acid chain; its full sequence is MVIQKNWQELIKPNKLEVVPGHDPKRVATVVAEPLERGFGTTLGNALRRVLLSSLQGAAVTSVHIDGVLHEFSSIPGVREDVTDIVLNIKTIAIRSNSDAPKRMTLRKTGPGLVTAGDISTIGDIQILNPDLVLCTLDEGAEIRMEFTVATGKGYVPADRNRPEDAPIGLIPVDALFSPVTKVSYRIENTREGQDLDKDKLTMTVETNGAVSPEDALAYAARIIQDQLQIFVNFEEPRKEEAAPLAPQLPFNPALLKKVDELELSVRSANCLKNDNIVYIGDLIQKTEAEMLRTPNFGRKSLNEIKEVLAAMGLHLGMDVPGWPPENIEDLAKRFEEHY.

The segment at 1 to 235 (MVIQKNWQEL…DQLQIFVNFE (235 aa)) is alpha N-terminal domain (alpha-NTD). An alpha C-terminal domain (alpha-CTD) region spans residues 251-339 (FNPALLKKVD…DLAKRFEEHY (89 aa)).

The protein belongs to the RNA polymerase alpha chain family. Homodimer. The RNAP catalytic core consists of 2 alpha, 1 beta, 1 beta' and 1 omega subunit. When a sigma factor is associated with the core the holoenzyme is formed, which can initiate transcription.

The catalysed reaction is RNA(n) + a ribonucleoside 5'-triphosphate = RNA(n+1) + diphosphate. Its function is as follows. DNA-dependent RNA polymerase catalyzes the transcription of DNA into RNA using the four ribonucleoside triphosphates as substrates. This chain is DNA-directed RNA polymerase subunit alpha, found in Methylobacterium sp. (strain 4-46).